A 377-amino-acid chain; its full sequence is Ipis-1 (377 aa).

N-linked (GlcNAc...) asparagine glycans are attached at residues asparagine 11 and asparagine 226.

It belongs to the serpin family. As to expression, female salivary gland. Not detected in midgut and other tissues.

It localises to the secreted. Functionally, salivary protein with immunosuppressive properties that can modulate blood feeding of ticks on vertebrate species. Inhibits proliferation of bovine peripheral blood mononuclear cells (PBMCs). Inhibits IFN-gamma (IFNG) production by bovine PBMCs. The sequence is that of Ipis-1 from Ixodes persulcatus (Taiga tick).